A 745-amino-acid polypeptide reads, in one-letter code: Cullin-2 (745 aa).

At Lys393 the chain carries N6-acetyllysine. A Phosphothreonine modification is found at Thr661. The Cullin neddylation domain occupies 675–735 (DRKMYLQAAI…IDKQYIERSQ (61 aa)). A Glycyl lysine isopeptide (Lys-Gly) (interchain with G-Cter in NEDD8) cross-link involves residue Lys689.

It belongs to the cullin family. In terms of assembly, component of multiple Cul2-RING (CRL2) E3 ubiquitin-protein ligase complexes consisting of CUL2, Elongin BC (ELOB and ELOC), RBX1 and a variable substrate-specific adapter; this complex is also known as ECS (Elongin BC-CUL2/5-SOCS-box protein) complex and may consist of CUL2 or CUL5. Component of the ECS(VHL) or CBC(VHL) complex containing CUL2, RBX1, ELOB, ELOC and VHL. Component of the ECS(MED8) complex with the probable substrate recognition component MED8. Component of multiple ECS complexes part of the DesCEND (destruction via C-end degrons) pathway, which contain either KLHDC2, KLHDC3, KLHDC10, APPBP2, FEM1A, FEM1B or FEM1C as substrate-recognition component. Component of the ECS(LRR1) complex with the substrate recognition component LRR1. Component of a CRL2(FEM1B) complex containing CUL2, RBX1, ELOB, ELOC and FEM1B. Component of a CRL2(FEM1C) complex containing CUL2, RBX1, ELOB, ELOC and FEM1C. Part of an E3 ubiquitin-protein ligase complex including ZYG11B, CUL2 and Elongin BC. Part of an E3 ubiquitin-protein ligase complex including ZER1, CUL2 and Elongin BC. Interacts with RBX1, RNF7, FEM1B and TIP120A/CAND1. Found in a complex composed of LIMD1, VHL, EGLN1/PHD2, ELOB and CUL2. Interacts (when neddylated) with ARIH1; leading to activate the E3 ligase activity of ARIH1. Interacts (unneddylated form) with DCUN1D1, DCUN1D2, DCUN1D3, DCUN1D4 and DCUN1D5; these interactions promote the cullin neddylation. Component of VCB (elongins BC/CUL2/VHL) complex that contains at least DCUN1D1, CUL2 and VHL; this complex triggers CUL2 neddylation and consequently cullin ring ligase (CRL) substrates polyubiquitylation. Neddylated; which enhances the ubiquitination activity of ECS (Elongin BC-CUL2/5-SOCS-box protein) E3 ubiquitin-protein ligase complexes. Neddylation leads to structural rearrangment in the complex that allows interaction between the E2 ubiquitin-conjugating enzyme and the acceptor ubiquitin. CBC(VHL) complex formation seems to promote neddylation. Deneddylated via its interaction with the COP9 signalosome (CSN) complex.

The protein localises to the nucleus. The protein operates within protein modification; protein ubiquitination. Functionally, core component of multiple cullin-RING-based ECS (ElonginB/C-CUL2/5-SOCS-box protein) E3 ubiquitin-protein ligase complexes, which mediate the ubiquitination of target proteins. CUL2 may serve as a rigid scaffold in the complex and may contribute to catalysis through positioning of the substrate and the ubiquitin-conjugating enzyme. The E3 ubiquitin-protein ligase activity of the complex is dependent on the neddylation of the cullin subunit and is inhibited by the association of the deneddylated cullin subunit with TIP120A/CAND1. The functional specificity of the ECS complex depends on the substrate recognition component. ECS(VHL) mediates the ubiquitination of hypoxia-inducible factor (HIF). A number of ECS complexes (containing either KLHDC2, KLHDC3, KLHDC10, APPBP2, FEM1A, FEM1B or FEM1C as substrate-recognition component) are part of the DesCEND (destruction via C-end degrons) pathway, which recognizes a C-degron located at the extreme C terminus of target proteins, leading to their ubiquitination and degradation. ECS complexes and ARIH1 collaborate in tandem to mediate ubiquitination of target proteins. ECS(LRR1) ubiquitinates MCM7 and promotes CMG replisome disassembly by VCP and chromatin extraction during S-phase. The chain is Cullin-2 (CUL2) from Pongo abelii (Sumatran orangutan).